The following is a 185-amino-acid chain: Pyruvate/ketoisovalerate oxidoreductases common subunit gamma (185 aa).

Heterotetramer of one alpha, one beta, one delta and one gamma chain.

The enzyme catalyses 2 oxidized [2Fe-2S]-[ferredoxin] + pyruvate + CoA = 2 reduced [2Fe-2S]-[ferredoxin] + acetyl-CoA + CO2 + H(+). It carries out the reaction 3-methyl-2-oxobutanoate + 2 oxidized [2Fe-2S]-[ferredoxin] + CoA = 2-methylpropanoyl-CoA + 2 reduced [2Fe-2S]-[ferredoxin] + CO2 + H(+). In Thermococcus kodakarensis (strain ATCC BAA-918 / JCM 12380 / KOD1) (Pyrococcus kodakaraensis (strain KOD1)), this protein is Pyruvate/ketoisovalerate oxidoreductases common subunit gamma (porG).